Here is a 169-residue protein sequence, read N- to C-terminus: Peptide methionine sulfoxide reductase MsrA (169 aa).

The active site involves C10.

Belongs to the MsrA Met sulfoxide reductase family.

It catalyses the reaction L-methionyl-[protein] + [thioredoxin]-disulfide + H2O = L-methionyl-(S)-S-oxide-[protein] + [thioredoxin]-dithiol. The enzyme catalyses [thioredoxin]-disulfide + L-methionine + H2O = L-methionine (S)-S-oxide + [thioredoxin]-dithiol. In terms of biological role, has an important function as a repair enzyme for proteins that have been inactivated by oxidation. Catalyzes the reversible oxidation-reduction of methionine sulfoxide in proteins to methionine. This chain is Peptide methionine sulfoxide reductase MsrA, found in Streptococcus pyogenes serotype M28 (strain MGAS6180).